Reading from the N-terminus, the 459-residue chain is Ribulose bisphosphate carboxylase large chain (459 aa).

K4 is modified (N6,N6,N6-trimethyllysine). Residues N113 and T163 each contribute to the substrate site. K165 functions as the Proton acceptor in the catalytic mechanism. K167 is a substrate binding site. Mg(2+) contacts are provided by K191, D193, and E194. The residue at position 191 (K191) is an N6-carboxylysine. Catalysis depends on H284, which acts as the Proton acceptor. Substrate-binding residues include R285, H317, and S369.

Belongs to the RuBisCO large chain family. Type I subfamily. Heterohexadecamer of 8 large chains and 8 small chains; disulfide-linked. The disulfide link is formed within the large subunit homodimers. Mg(2+) is required as a cofactor. In terms of processing, the disulfide bond which can form in the large chain dimeric partners within the hexadecamer appears to be associated with oxidative stress and protein turnover.

It localises to the plastid. The protein resides in the chloroplast. It carries out the reaction 2 (2R)-3-phosphoglycerate + 2 H(+) = D-ribulose 1,5-bisphosphate + CO2 + H2O. The enzyme catalyses D-ribulose 1,5-bisphosphate + O2 = 2-phosphoglycolate + (2R)-3-phosphoglycerate + 2 H(+). RuBisCO catalyzes two reactions: the carboxylation of D-ribulose 1,5-bisphosphate, the primary event in carbon dioxide fixation, as well as the oxidative fragmentation of the pentose substrate in the photorespiration process. Both reactions occur simultaneously and in competition at the same active site. The sequence is that of Ribulose bisphosphate carboxylase large chain from Garrya elliptica (Wavyleaf silktassel).